Here is a 366-residue protein sequence, read N- to C-terminus: tRNA/tmRNA (uracil-C(5))-methyltransferase (366 aa).

Glutamine 190, tyrosine 218, asparagine 223, glutamate 239, and aspartate 299 together coordinate S-adenosyl-L-methionine. Residue cysteine 324 is the Nucleophile of the active site. The Proton acceptor role is filled by glutamate 358.

Belongs to the class I-like SAM-binding methyltransferase superfamily. RNA M5U methyltransferase family. TrmA subfamily.

It catalyses the reaction uridine(54) in tRNA + S-adenosyl-L-methionine = 5-methyluridine(54) in tRNA + S-adenosyl-L-homocysteine + H(+). The enzyme catalyses uridine(341) in tmRNA + S-adenosyl-L-methionine = 5-methyluridine(341) in tmRNA + S-adenosyl-L-homocysteine + H(+). In terms of biological role, dual-specificity methyltransferase that catalyzes the formation of 5-methyluridine at position 54 (m5U54) in all tRNAs, and that of position 341 (m5U341) in tmRNA (transfer-mRNA). The sequence is that of tRNA/tmRNA (uracil-C(5))-methyltransferase from Escherichia coli O157:H7.